The primary structure comprises 452 residues: Phosphoglucosamine mutase (452 aa).

Serine 108 serves as the catalytic Phosphoserine intermediate. The Mg(2+) site is built by serine 108, aspartate 247, aspartate 249, and aspartate 251. Phosphoserine is present on serine 108.

Belongs to the phosphohexose mutase family. Mg(2+) serves as cofactor. In terms of processing, activated by phosphorylation.

The catalysed reaction is alpha-D-glucosamine 1-phosphate = D-glucosamine 6-phosphate. Functionally, catalyzes the conversion of glucosamine-6-phosphate to glucosamine-1-phosphate. In Burkholderia thailandensis (strain ATCC 700388 / DSM 13276 / CCUG 48851 / CIP 106301 / E264), this protein is Phosphoglucosamine mutase.